Here is a 130-residue protein sequence, read N- to C-terminus: uncharacterized protein (130 aa).

In terms of domain architecture, HTH cro/C1-type spans 19–73; the sequence is IYSLRLAKGLSRQQLAEVIDVTHQQLQKYEKAINRISVGRLVLIAEALDRNIDYF. A DNA-binding region (H-T-H motif) is located at residues 30–49; sequence RQQLAEVIDVTHQQLQKYEK.

This is an uncharacterized protein from Rickettsia prowazekii (strain Madrid E).